A 381-amino-acid polypeptide reads, in one-letter code: MRFQSIMMLTITCAGTCLAEGLAPSDQAYRPTMTGLKSRLNDPRPLSTATIATSSERFLRFDTVARDTAGNDEERVGPSWLAKVDGLMHKMVTSSLSAEEAQLKVWIQSQIHPRELFGVLSLGKRAAKLDDNPDFVQWLRLVKDFRANNGNQAFSDLDIYYLLLKTNSPEQLKLLFETLRHTPGMTKIGASMEKSLSGNWIRKALEQDTYPTIVYNTLRLKDAGTKLDDTPMFRQWLEYVEKYWNKNAGAFFGDTQMLTLFQKTMTEEEDIIKLVHMLRNNPGMKSHADKLERYLLLTSESSHKTMADVWLKARETPEEVFRILRLAEKQTAAADDNRMLNLWLRYTQTYRDKIDKNAFSDAEALQFFRKAKPLDFDWEIV.

Residues Met1–Ala19 form the signal peptide. Positions Arg57–Arg75 match the RxLR-dEER motif. WY-domain regions lie at residues Ser97–Gly150, Asn151–Gly198, Asn199–Asn247, Phe251–Ser299, and Ser302–Ile354. The ATG8 interacting motif signature appears at Lys372–Val381.

This sequence belongs to the RxLR effector family. As to quaternary structure, interacts via its C-terminal AIM with host ATG8CL.

It is found in the secreted. It localises to the host nucleus. The protein resides in the host cytoplasm. Its function is as follows. Effector that specifically binds host autophagy protein ATG8CL of the ATG8 family to stimulate autophagosome formation and subsequent autophagy rather than blocking autophagic flux. The pathogen remodels host-microbe interface by co-opting the host autophagy machinery which plays a key role in plant immunity. PexRD54 competes with the autophagy cargo receptor Joka2 to deplete it out of ATG8CL complexes and interferes with Joka2's positive effect on pathogen defense. The protein is RxLR effector protein 54 of Phytophthora infestans (strain T30-4) (Potato late blight agent).